A 258-amino-acid polypeptide reads, in one-letter code: uncharacterized protein (258 aa).

NADP(+) contacts are provided by Ile17, Asp53, Asn80, Arg113, Tyr145, Lys149, Ile178, and Ser180. Tyr145 functions as the Proton donor in the catalytic mechanism. Catalysis depends on Lys149, which acts as the Lowers pKa of active site Tyr.

Belongs to the short-chain dehydrogenases/reductases (SDR) family.

The protein localises to the cytoplasm. It localises to the nucleus. This is an uncharacterized protein from Schizosaccharomyces pombe (strain 972 / ATCC 24843) (Fission yeast).